The primary structure comprises 729 residues: Fatty acid oxidation complex subunit alpha (729 aa).

Residues 1 to 189 (MLYKGDTLYL…KIGLVDGVVK (189 aa)) are enoyl-CoA hydratase/isomerase. Residue Asp296 coordinates substrate. The tract at residues 311 to 729 (ETPKQAAVLG…ARPVGSLKTA (419 aa)) is 3-hydroxyacyl-CoA dehydrogenase. Residues Met324, Asp343, 400–402 (VVE), Lys407, and Ser429 contribute to the NAD(+) site. Catalysis depends on His450, which acts as the For 3-hydroxyacyl-CoA dehydrogenase activity. Residue Asn453 participates in NAD(+) binding. Substrate contacts are provided by Asn500 and Tyr660. The interval 707-729 (TRHNEPYYPPVEPARPVGSLKTA) is disordered.

In the N-terminal section; belongs to the enoyl-CoA hydratase/isomerase family. The protein in the C-terminal section; belongs to the 3-hydroxyacyl-CoA dehydrogenase family. As to quaternary structure, heterotetramer of two alpha chains (FadB) and two beta chains (FadA).

It carries out the reaction a (3S)-3-hydroxyacyl-CoA + NAD(+) = a 3-oxoacyl-CoA + NADH + H(+). The catalysed reaction is a (3S)-3-hydroxyacyl-CoA = a (2E)-enoyl-CoA + H2O. The enzyme catalyses a 4-saturated-(3S)-3-hydroxyacyl-CoA = a (3E)-enoyl-CoA + H2O. It catalyses the reaction (3S)-3-hydroxybutanoyl-CoA = (3R)-3-hydroxybutanoyl-CoA. It carries out the reaction a (3Z)-enoyl-CoA = a 4-saturated (2E)-enoyl-CoA. The catalysed reaction is a (3E)-enoyl-CoA = a 4-saturated (2E)-enoyl-CoA. It functions in the pathway lipid metabolism; fatty acid beta-oxidation. Involved in the aerobic and anaerobic degradation of long-chain fatty acids via beta-oxidation cycle. Catalyzes the formation of 3-oxoacyl-CoA from enoyl-CoA via L-3-hydroxyacyl-CoA. It can also use D-3-hydroxyacyl-CoA and cis-3-enoyl-CoA as substrate. This Salmonella typhi protein is Fatty acid oxidation complex subunit alpha.